We begin with the raw amino-acid sequence, 116 residues long: Protein Rev (116 aa).

A phosphoserine; by host CK2 mark is found at Ser5 and Ser8. The homomultimerization stretch occupies residues 18 to 26 (LIKFLYQSN). A disordered region spans residues 23 to 49 (YQSNPPPNPEGTRQARRNRRRRWRERQ). The Nuclear localization signal and RNA-binding (RRE) motif lies at 34-50 (TRQARRNRRRRWRERQR). Residues 36 to 47 (QARRNRRRRWRE) are compositionally biased toward basic residues. Residues 73 to 84 (LQLPPLERLTLD) carry the Nuclear export signal and binding to XPO1 motif. Phosphoserine; by host occurs at positions 92 and 99. A disordered region spans residues 92-116 (SGTQGVGSPQILVESPTVLESGTKE).

Belongs to the HIV-1 REV protein family. As to quaternary structure, homomultimer; when bound to the RRE. Multimeric assembly is essential for activity and may involve XPO1. Binds to human KPNB1, XPO1, TNPO1, RANBP5 and IPO7. Interacts with the viral Integrase. Interacts with human KHDRBS1. Interacts with human NAP1; this interaction decreases Rev multimerization and stimulates its activity. Interacts with human DEAD-box helicases DDX3 and DDX24; these interactions may serve for viral RNA export to the cytoplasm and packaging, respectively. Interacts with human PSIP1; this interaction may inhibit HIV-1 DNA integration by promoting dissociation of the Integrase-LEDGF/p75 complex. In terms of processing, asymmetrically arginine dimethylated at one site by host PRMT6. Methylation impairs the RNA-binding activity and export of viral RNA from the nucleus to the cytoplasm. Post-translationally, phosphorylated by protein kinase CK2. Presence of, and maybe binding to the N-terminus of the regulatory beta subunit of CK2 is necessary for CK2-mediated Rev's phosphorylation.

Its subcellular location is the host nucleus. It localises to the host nucleolus. It is found in the host cytoplasm. Functionally, escorts unspliced or incompletely spliced viral pre-mRNAs (late transcripts) out of the nucleus of infected cells. These pre-mRNAs carry a recognition sequence called Rev responsive element (RRE) located in the env gene, that is not present in fully spliced viral mRNAs (early transcripts). This function is essential since most viral proteins are translated from unspliced or partially spliced pre-mRNAs which cannot exit the nucleus by the pathway used by fully processed cellular mRNAs. Rev itself is translated from a fully spliced mRNA that readily exits the nucleus. Rev's nuclear localization signal (NLS) binds directly to KPNB1/Importin beta-1 without previous binding to KPNA1/Importin alpha-1. KPNB1 binds to the GDP bound form of RAN (Ran-GDP) and targets Rev to the nucleus. In the nucleus, the conversion from Ran-GDP to Ran-GTP dissociates Rev from KPNB1 and allows Rev's binding to the RRE in viral pre-mRNAs. Rev multimerization on the RRE via cooperative assembly exposes its nuclear export signal (NES) to the surface. Rev can then form a complex with XPO1/CRM1 and Ran-GTP, leading to nuclear export of the complex. Conversion from Ran-GTP to Ran-GDP mediates dissociation of the Rev/RRE/XPO1/RAN complex, so that Rev can return to the nucleus for a subsequent round of export. Beside KPNB1, also seems to interact with TNPO1/Transportin-1, RANBP5/IPO5 and IPO7/RANBP7 for nuclear import. The nucleoporin-like HRB/RIP is an essential cofactor that probably indirectly interacts with Rev to release HIV RNAs from the perinuclear region to the cytoplasm. The protein is Protein Rev of Human immunodeficiency virus type 1 group M subtype B (isolate BRU/LAI) (HIV-1).